Consider the following 238-residue polypeptide: Uridylate kinase (238 aa).

Residue 12 to 15 (KLSG) participates in ATP binding. Residue Gly54 coordinates UMP. Residues Gly55 and Arg59 each contribute to the ATP site. Residues Asp74 and 135–142 (TGNPFFTT) contribute to the UMP site. ATP-binding residues include Thr162, Tyr168, and Asp171.

This sequence belongs to the UMP kinase family. Homohexamer.

It is found in the cytoplasm. The catalysed reaction is UMP + ATP = UDP + ADP. It functions in the pathway pyrimidine metabolism; CTP biosynthesis via de novo pathway; UDP from UMP (UMPK route): step 1/1. Its activity is regulated as follows. Inhibited by UTP. In terms of biological role, catalyzes the reversible phosphorylation of UMP to UDP. The sequence is that of Uridylate kinase from Dechloromonas aromatica (strain RCB).